We begin with the raw amino-acid sequence, 3707 residues long: Basement membrane-specific heparan sulfate proteoglycan core protein (3707 aa).

Positions 1–21 are cleaved as a signal peptide; sequence MGQRAVGSLLLGLLLHARLLA. 3 O-linked (Xyl...) (heparan sulfate) serine glycosylation sites follow: serine 65, serine 71, and serine 76. The SEA domain occupies 80–191; that stretch reads QMVYFRALVN…WGFKFRRLGT (112 aa). Asparagine 89 carries N-linked (GlcNAc...) asparagine glycosylation. 4 LDL-receptor class A domains span residues 195–234, 281–319, 320–359, and 360–403; these read FPRVCTETEFACHSYNECVALEYRCDRRPDCRDMSDELNC, GPSACGPQEASCHSGHCIPRDYLCDGQEDCRDGSDELGC, ASPPPCEPNEFACENGHCALKLWRCDGDFDCEDRTDEANC, and SVKQ…EFGC. 13 disulfide bridges follow: cysteine 199–cysteine 212, cysteine 206–cysteine 225, cysteine 219–cysteine 234, cysteine 285–cysteine 297, cysteine 292–cysteine 310, cysteine 304–cysteine 319, cysteine 325–cysteine 337, cysteine 332–cysteine 350, cysteine 344–cysteine 359, cysteine 368–cysteine 381, cysteine 375–cysteine 394, cysteine 388–cysteine 403, and cysteine 428–cysteine 479. Asparagine 358 carries an N-linked (GlcNAc...) asparagine glycan. In terms of domain architecture, Ig-like C2-type 1 spans 404–504; the sequence is MPPQVVTPPQ…VLELVPQRGP (101 aa). The region spanning 521-530 is the Laminin EGF-like 1; first part domain; the sequence is CFCFGVTNVC. The 193-residue stretch at 538 to 730 folds into the Laminin IV type A 1 domain; the sequence is DQIRLSFDQP…IHGRAHSVEE (193 aa). Residue asparagine 554 is glycosylated (N-linked (GlcNAc...) asparagine). The Laminin EGF-like 1; second part domain occupies 731-763; the sequence is CRCPIGYSGLSCESCDAHFTRVPGGPYLGTCSG. Cystine bridges form between cysteine 764–cysteine 773, cysteine 766–cysteine 780, cysteine 783–cysteine 792, cysteine 795–cysteine 811, cysteine 814–cysteine 829, cysteine 816–cysteine 839, cysteine 842–cysteine 851, cysteine 854–cysteine 869, cysteine 879–cysteine 892, cysteine 894–cysteine 903, and cysteine 906–cysteine 921. 2 consecutive Laminin EGF-like domains span residues 764–813 and 814–871; these read CNCN…ACRP and CPCP…KCRP. A Laminin EGF-like 4; truncated domain is found at 879 to 923; sequence CDERGSLGTSGETCRCKNNVVGRLCNECSDGSFHLSKQNPDGCLK. In terms of domain architecture, Laminin EGF-like 5; first part spans 924-933; that stretch reads CFCMGVSRQC. Residues 941–1125 enclose the Laminin IV type A 2 domain; sequence AQVLGASEQP…GQDSAREVEQ (185 aa). One can recognise a Laminin EGF-like 5; second part domain in the interval 1126–1158; it reads CTCPPGYRGPSCQDCDTGYTRVPSGLYLGTCER. Disulfide bonds link cysteine 1159-cysteine 1168, cysteine 1161-cysteine 1175, cysteine 1178-cysteine 1187, cysteine 1190-cysteine 1206, cysteine 1209-cysteine 1224, cysteine 1211-cysteine 1234, cysteine 1237-cysteine 1246, cysteine 1249-cysteine 1263, cysteine 1275-cysteine 1287, cysteine 1277-cysteine 1293, cysteine 1295-cysteine 1304, and cysteine 1307-cysteine 1322. Laminin EGF-like domains lie at 1159–1208, 1209–1265, and 1275–1324; these read CNCH…DCQP, CPCY…PCHR, and CGCD…GCLP. The Laminin EGF-like 9; first part domain maps to 1325-1334; sequence CFCMGVTQQC. Residues 1344–1529 form the Laminin IV type A 3 domain; the sequence is ISTHFAPGDF…SGPRALEVEE (186 aa). Positions 1530–1562 constitute a Laminin EGF-like 9; second part domain; sequence CRCPPGYVGLSCQDCAPGYTRTGSGLYLGQCEL. Cystine bridges form between cysteine 1563–cysteine 1572, cysteine 1565–cysteine 1579, cysteine 1582–cysteine 1591, cysteine 1594–cysteine 1610, cysteine 1613–cysteine 1628, cysteine 1615–cysteine 1638, cysteine 1641–cysteine 1650, and cysteine 1653–cysteine 1668. Laminin EGF-like domains lie at 1563–1612 and 1613–1670; these read CECN…DCQP and CACP…RCQP. Ig-like C2-type domains are found at residues 1677 to 1771, 1772 to 1865, 1866 to 1954, 1955 to 2049, 2050 to 2148, 2149 to 2244, 2245 to 2343, 2344 to 2436, 2437 to 2532, 2533 to 2619, 2620 to 2720, 2721 to 2809, 2810 to 2895, and 2896 to 2980; these read EVQI…KPIM, VTVE…STAP, VASI…GGSG, PRVQ…PAPA, SPAP…PGVV, PPIR…PAPG, LAQP…RLRS, PVIS…PPTV, SVLP…APGT, PQVQ…VESP, PYAT…GGST, PTVQ…ALPS, VLIN…LVQA, and LPQI…LQVP. The segment at 1713–1733 is disordered; the sequence is DGRPLPSSAQQRHQGSELHFP. Cystine bridges form between cysteine 1792-cysteine 1839, cysteine 1886-cysteine 1932, and cysteine 1976-cysteine 2021. Residues 2039 to 2061 form a disordered region; that stretch reads SPSTNSPPAPASPAPIRIESSSS. A compositionally biased stretch (low complexity) spans 2052–2061; sequence APIRIESSSS. 3 disulfides stabilise this stretch: cysteine 2073-cysteine 2118, cysteine 2170-cysteine 2215, and cysteine 2268-cysteine 2313. Asparagine 2336, asparagine 2394, and asparagine 2427 each carry an N-linked (GlcNAc...) asparagine glycan. Residues cysteine 2365 and cysteine 2413 are joined by a disulfide bond. 2 disulfide bridges follow: cysteine 2456-cysteine 2506 and cysteine 2554-cysteine 2599. An N-linked (GlcNAc...) asparagine glycan is attached at asparagine 2600. A disulfide bridge connects residues cysteine 2641 and cysteine 2686. 2 cysteine pairs are disulfide-bonded: cysteine 2831/cysteine 2876 and cysteine 2917/cysteine 2962. Positions 2984–3162 constitute a Laminin G-like 1 domain; sequence IPYFTQTPYS…VNLTTHGISH (179 aa). N-linked (GlcNAc...) asparagine glycosylation is found at asparagine 3098 and asparagine 3154. 5 disulfide bridges follow: cysteine 3137–cysteine 3163, cysteine 3166–cysteine 3177, cysteine 3171–cysteine 3187, cysteine 3204–cysteine 3216, and cysteine 3229–cysteine 3238. Residues 3163–3241 enclose the EGF-like domain; that stretch reads CPTCQDRPCQ…GRSGVRCEEG (79 aa). The Laminin G-like 2 domain maps to 3245–3425; the sequence is TTPSMSGAGS…VGQCYDSSPC (181 aa). Asparagine 3385 carries an N-linked (GlcNAc...) asparagine glycan. 7 cysteine pairs are disulfide-bonded: cysteine 3393/cysteine 3419, cysteine 3425/cysteine 3436, cysteine 3430/cysteine 3446, cysteine 3448/cysteine 3457, cysteine 3464/cysteine 3476, cysteine 3470/cysteine 3481, and cysteine 3483/cysteine 3492. O-linked (Xyl...) (chondroitin sulfate) serine glycosylation occurs at serine 3510. The region spanning 3518–3705 is the Laminin G-like 3 domain; sequence QYGAYFYDNG…AQAGANTRPC (188 aa). Ca(2+)-binding residues include aspartate 3574 and leucine 3591. A mediates motor neuron attachment region spans residues 3615–3617; that stretch reads LRE. The Ca(2+) site is built by alanine 3641 and asparagine 3643. A disulfide bridge connects residues cysteine 3671 and cysteine 3705. Positions 3680–3707 are disordered; sequence ARPGAPPPQPLDLQHRAQAGANTRPCPS.

Has a strong tendency to aggregate in dimers or stellate structures. Interacts with other basement membrane components such as laminin, prolargin and collagen type IV. Interacts with COL13A1. Interacts with FGFBP1. Interacts with VWA1. Interacts (via C-terminus) with ECM1 (via C-terminus). Interacts with SVEP1. Proteolytic processing produces the C-terminal angiogenic peptide, endorepellin. This peptide can be further processed to produce the LG3 peptide. In terms of processing, O-glycosylated. Contains three heparan sulfate chains. Also contains chondroitin sulfate.

The protein resides in the secreted. The protein localises to the extracellular space. Its subcellular location is the extracellular matrix. It localises to the basement membrane. In terms of biological role, integral component of basement membranes. Component of the glomerular basement membrane (GBM), responsible for the fixed negative electrostatic membrane charge, and which provides a barrier which is both size- and charge-selective. It serves as an attachment substrate for cells. Plays essential roles in vascularization. Critical for normal heart development and for regulating the vascular response to injury. Also required for avascular cartilage development. Functionally, anti-angiogenic and anti-tumor peptide that inhibits endothelial cell migration, collagen-induced endothelial tube morphogenesis and blood vessel growth in the chorioallantoic membrane. Blocks endothelial cell adhesion to fibronectin and type I collagen. Anti-tumor agent in neovascularization. Interaction with its ligand, integrin alpha2/beta1, is required for the anti-angiogenic properties. Evokes a reduction in phosphorylation of receptor tyrosine kinases via alpha2/beta1 integrin-mediated activation of the tyrosine phosphatase, PTPN6. Its function is as follows. Has anti-angiogenic properties that require binding of calcium ions for full activity. The protein is Basement membrane-specific heparan sulfate proteoglycan core protein (Hspg2) of Mus musculus (Mouse).